The primary structure comprises 223 residues: Membrane protein (223 aa).

The Virion surface segment spans residues 1–18 (MAENCTLDSEQAVLLFKE). Residues 19–39 (YNLFITAFLLFLTILLQYGYA) traverse the membrane as a helical segment. Over 40–49 (TRSRTIYILK) the chain is Intravirion. A helical transmembrane segment spans residues 50–70 (MIVLWCFWPLNIAVGVISCIY). Residues 71 to 75 (PPNTG) are Virion surface-facing. A helical transmembrane segment spans residues 76–96 (GLVAAIILTVFACLSFVGYWI). Over 97 to 223 (QSCRLFKRCR…VATGGSSLYT (127 aa)) the chain is Intravirion.

The protein belongs to the gammacoronaviruses M protein family. Homomultimer. Interacts with envelope E protein in the budding compartment of the host cell, which is located between endoplasmic reticulum and the Golgi complex. Forms a complex with HE and S proteins. Interacts with nucleocapsid N protein. This interaction probably participates in RNA packaging into the virus.

Its subcellular location is the virion membrane. It is found in the host Golgi apparatus membrane. Functionally, component of the viral envelope that plays a central role in virus morphogenesis and assembly via its interactions with other viral proteins. The chain is Membrane protein from Gallus gallus (Chicken).